The primary structure comprises 533 residues: MKMRRYKLFLMFCMAGLCLISFLHFFKTLSYVTFPRELASLSPNLVSSFFWNNAPVTPQASPEPGGPDLLRTPLYSHSPLLQPLPPSKAAEELHRVDLVLPEDTTEYFVRTKAGGVCFKPGTKMLERPPPGRPEEKPEGANGSSARRPPRYLLSARERTGGRGARRKWVECVCLPGWHGPSCGVPTVVQYSNLPTKERLVPREVPRRVINAINVNHEFDLLDVRFHELGDVVDAFVVCESNFTAYGEPRPLKFREMLTNGTFEYIRHKVLYVFLDHFPPGGRQDGWIADDYLRTFLTQDGVSRLRNLRPDDVFIIDDADEIPARDGVLFLKLYDGWTEPFAFHMRKSLYGFFWKQPGTLEVVSGCTVDMLQAVYGLDGIRLRRRQYYTMPNFRQYENRTGHILVQWSLGSPLHFAGWHCSWCFTPEGIYFKLVSAQNGDFPRWGDYEDKRDLNYIRGLIRTGGWFDGTQQEYPPADPSEHMYAPKYLLKNYDRFHYLLDNPYQEPRSTAAGGWRHRGPEGRPPARGKLDEAEV.

The Cytoplasmic portion of the chain corresponds to Met1–Lys7. The helical; Signal-anchor for type II membrane protein transmembrane segment at Leu8 to Leu23 threads the bilayer. Over His24–Val533 the chain is Lumenal. A disordered region spans residues Lys119 to Arg158. N-linked (GlcNAc...) asparagine glycosylation is found at Asn141, Asn241, Asn259, and Asn397. The tract at residues Ser507–Val533 is disordered.

It belongs to the glycosyltransferase 17 family. Interacts with MGAT4D.

It is found in the golgi apparatus membrane. It catalyses the reaction N(4)-{beta-D-GlcNAc-(1-&gt;2)-alpha-D-Man-(1-&gt;3)-[beta-D-GlcNAc-(1-&gt;2)-alpha-D-Man-(1-&gt;6)]-beta-D-Man-(1-&gt;4)-beta-D-GlcNAc-(1-&gt;4)-beta-D-GlcNAc}-L-asparaginyl-[protein] + UDP-N-acetyl-alpha-D-glucosamine = N(4)-{beta-D-GlcNAc-(1-&gt;2)-alpha-D-Man-(1-&gt;3)-[beta-D-GlcNAc-(1-&gt;4)]-[beta-D-GlcNAc-(1-&gt;2)-alpha-D-Man-(1-&gt;6)]-beta-D-Man-(1-&gt;4)-beta-D-GlcNAc-(1-&gt;4)-beta-D-GlcNAc}-L-asparaginyl-[protein] + UDP + H(+). The protein operates within protein modification; protein glycosylation. Its function is as follows. It is involved in the regulation of the biosynthesis and biological function of glycoprotein oligosaccharides. Catalyzes the addition of N-acetylglucosamine in beta 1-4 linkage to the beta-linked mannose of the trimannosyl core of N-linked sugar chains, called bisecting N-acetylglucosamine (GlcNAc). It is one of the most important enzymes involved in the regulation of the biosynthesis of glycoprotein oligosaccharides. The addition of this bisecting GlcNAc residue alters not only the composition, but also the conformation of the N-glycan. The introduction of the bisecting GlcNAc residue results in the suppression of further processing and elongation of N-glycans, precluding the formation of beta-1,6 GlcNAc branching, catalyzed by MGAT5 since it is unable to use the bisected oligosaccharide as a substrate. Addition of bisecting N-acetylglucosamine to CDH1/E-cadherin modulates CDH1 cell membrane location. Inhibits NeuAc-alpha-2,3-Gal-beta-1,4-GlcNAc- formation which modulates sialylation levels and plays a role in cell migration regulation. In brain, addition of bisecting N-acetylglucosamine to BACE1 blocks its lysosomal targeting in response to oxidative stress and further degradation which increases its location to early endosome and the APP cleavage. In Homo sapiens (Human), this protein is Beta-1,4-mannosyl-glycoprotein 4-beta-N-acetylglucosaminyltransferase.